Consider the following 200-residue polypeptide: Integrin beta-1-binding protein 1 (200 aa).

Positions 1–10 (MFRKGKKRHS) are enriched in basic residues. A disordered region spans residues 1 to 56 (MFRKGKKRHSSSSSQSSEISTKSKSVDSSLGGLSRSSTVASLDTDSTKSSGQSNNN). Positions 6–7 (KK) match the Nuclear localization signal motif. The segment covering 11–29 (SSSSQSSEISTKSKSVDSS) has biased composition (low complexity). The span at 34–56 (SRSSTVASLDTDSTKSSGQSNNN) shows a compositional bias: polar residues. Phosphothreonine; by CaMK2 is present on T38. S41 carries the post-translational modification Phosphoserine. The 143-residue stretch at 58-200 (DTCAEFRIKY…FDSVLTSEKP (143 aa)) folds into the PID domain. Residues 136-139 (YLII) are interaction with KRIT1. An interaction with ITGB1 region spans residues 139–141 (IRM).

Interacts (via N-terminus and PTB domain) with ROCK1. Found in a complex, at least composed of ITGB1BP1, KRIT1 and RAP1A. Interacts (via C-terminal region) with ITGB1 (via C-terminal cytoplasmic tail); the interaction prevents talin TLN1 binding to ITGB1 and KRIT1 and ITGB1 compete for the same binding site. Interacts with KRIT1 (via N-terminal NPXY motif); the interaction induces the opening conformation of KRIT1 and KRIT1 and ITGB1 compete for the same binding site. Isoform 2 does not interact with ITGB1. Interacts with CDC42 (GTP- or GDP-bound form); the interaction is increased with the CDC42-membrane bound forms and prevents both CDC42 activation and cell spreading. Interacts (via C-terminal domain region) with NME2. Interacts with FERMT2 and RAC1. In terms of processing, phosphorylation at Thr-38 seems to enhance integrin alpha5beta1-mediated cell adhesion. The degree of phosphorylation is regulated by integrin-dependent cell-matrix interaction.

The protein localises to the nucleus. It localises to the cytoplasm. The protein resides in the cytoskeleton. Its subcellular location is the cell membrane. It is found in the cell projection. The protein localises to the lamellipodium. It localises to the ruffle. Functionally, key regulator of the integrin-mediated cell-matrix interaction signaling by binding to the ITGB1 cytoplasmic tail and preventing the activation of integrin alpha-5/beta-1 (heterodimer of ITGA5 and ITGB1) by talin or FERMT1. Plays a role in cell proliferation, differentiation, spreading, adhesion and migration in the context of mineralization and bone development and angiogenesis. Stimulates cellular proliferation in a fibronectin-dependent manner. Involved in the regulation of beta-1 integrin-containing focal adhesion (FA) site dynamics by controlling its assembly rate during cell adhesion; inhibits beta-1 integrin clustering within FA by directly competing with talin TLN1, and hence stimulates osteoblast spreading and migration in a fibronectin- and/or collagen-dependent manner. Acts as a guanine nucleotide dissociation inhibitor (GDI) by regulating Rho family GTPases during integrin-mediated cell matrix adhesion; reduces the level of active GTP-bound form of both CDC42 and RAC1 GTPases upon cell adhesion to fibronectin. Stimulates the release of active CDC42 from the membranes to maintain it in an inactive cytoplasmic pool. Participates in the translocation of the Rho-associated protein kinase ROCK1 to membrane ruffles at cell leading edges of the cell membrane, leading to an increase of myoblast cell migration on laminin. Plays a role in bone mineralization at a late stage of osteoblast differentiation; modulates the dynamic formation of focal adhesions into fibrillar adhesions, which are adhesive structures responsible for fibronectin deposition and fibrillogenesis. Plays a role in blood vessel development; acts as a negative regulator of angiogenesis by attenuating endothelial cell proliferation and migration, lumen formation and sprouting angiogenesis by promoting AKT phosphorylation and inhibiting ERK1/2 phosphorylation through activation of the Notch signaling pathway. Promotes transcriptional activity of the MYC promoter. The sequence is that of Integrin beta-1-binding protein 1 (ITGB1BP1) from Bos taurus (Bovine).